Here is a 222-residue protein sequence, read N- to C-terminus: GEM-like protein 4 (222 aa).

In terms of domain architecture, GRAM spans K95 to Q173.

This sequence belongs to the GEM family.

The protein is GEM-like protein 4 of Arabidopsis thaliana (Mouse-ear cress).